The sequence spans 267 residues: GTP cyclohydrolase FolE2 (267 aa).

Belongs to the GTP cyclohydrolase IV family.

The catalysed reaction is GTP + H2O = 7,8-dihydroneopterin 3'-triphosphate + formate + H(+). The protein operates within cofactor biosynthesis; 7,8-dihydroneopterin triphosphate biosynthesis; 7,8-dihydroneopterin triphosphate from GTP: step 1/1. In terms of biological role, converts GTP to 7,8-dihydroneopterin triphosphate. In Citrifermentans bemidjiense (strain ATCC BAA-1014 / DSM 16622 / JCM 12645 / Bem) (Geobacter bemidjiensis), this protein is GTP cyclohydrolase FolE2.